The following is a 188-amino-acid chain: ATP-dependent protease subunit HslV (188 aa).

The active site involves threonine 7. The Na(+) site is built by glycine 162, cysteine 165, and serine 168.

It belongs to the peptidase T1B family. HslV subfamily. In terms of assembly, a double ring-shaped homohexamer of HslV is capped on each side by a ring-shaped HslU homohexamer. The assembly of the HslU/HslV complex is dependent on binding of ATP.

The protein resides in the cytoplasm. The catalysed reaction is ATP-dependent cleavage of peptide bonds with broad specificity.. Allosterically activated by HslU binding. Protease subunit of a proteasome-like degradation complex believed to be a general protein degrading machinery. This chain is ATP-dependent protease subunit HslV, found in Thiobacillus denitrificans (strain ATCC 25259 / T1).